The chain runs to 223 residues: MGQKGCPIGFRTAVTKKWRSLWYGNKQEFGKFLIEDVKIREHLRKKPSCQGAAGFIVRRMSGKIEVTIQTARPGLVIGKKGAEVDLLKEELRKLTGKEVWVEIAEIKRPELNAKLVADNIARQIERRVSFRRAMKKAMQSVMDAGAIGVKIQVSGRLAGAEIARSEWYKNGRVPLHTLRADIDYATASAETTYGIIGVKVWINLGEKTSTANANTGATAPAAQ.

In terms of domain architecture, KH type-2 spans 39–117 (IREHLRKKPS…RPELNAKLVA (79 aa)).

Belongs to the universal ribosomal protein uS3 family. In terms of assembly, part of the 30S ribosomal subunit. Forms a tight complex with proteins S10 and S14.

In terms of biological role, binds the lower part of the 30S subunit head. Binds mRNA in the 70S ribosome, positioning it for translation. The polypeptide is Small ribosomal subunit protein uS3 (Chlamydia caviae (strain ATCC VR-813 / DSM 19441 / 03DC25 / GPIC) (Chlamydophila caviae)).